The following is a 179-amino-acid chain: Adenine phosphoribosyltransferase (179 aa).

It belongs to the purine/pyrimidine phosphoribosyltransferase family. As to quaternary structure, homodimer.

Its subcellular location is the cytoplasm. It catalyses the reaction AMP + diphosphate = 5-phospho-alpha-D-ribose 1-diphosphate + adenine. It participates in purine metabolism; AMP biosynthesis via salvage pathway; AMP from adenine: step 1/1. Catalyzes a salvage reaction resulting in the formation of AMP, that is energically less costly than de novo synthesis. The protein is Adenine phosphoribosyltransferase of Helicobacter pylori (strain HPAG1).